A 185-amino-acid chain; its full sequence is 3-hydroxyanthranilate 3,4-dioxygenase (185 aa).

An O2-binding site is contributed by Arg-44. Fe cation-binding residues include His-48, Glu-54, and His-95. Glu-54 serves as a coordination point for substrate. The substrate site is built by Arg-99 and Glu-109. A divalent metal cation-binding residues include Cys-124, Cys-127, Cys-161, and Cys-164.

Belongs to the 3-HAO family. It depends on Fe(2+) as a cofactor.

It is found in the cytoplasm. It carries out the reaction 3-hydroxyanthranilate + O2 = (2Z,4Z)-2-amino-3-carboxymuconate 6-semialdehyde. It participates in cofactor biosynthesis; NAD(+) biosynthesis; quinolinate from L-kynurenine: step 3/3. In terms of biological role, catalyzes the oxidative ring opening of 3-hydroxyanthranilate to 2-amino-3-carboxymuconate semialdehyde, which spontaneously cyclizes to quinolinate. The protein is 3-hydroxyanthranilate 3,4-dioxygenase of Podospora anserina (strain S / ATCC MYA-4624 / DSM 980 / FGSC 10383) (Pleurage anserina).